An 800-amino-acid chain; its full sequence is MMLRKKTKQLISSILILVLLLSLFPTALAAEGNTREDNFKHLLGNDNVKRPSEAGALQLQEVDGQMTLVDQHGEKIQLRGMSTHGLQWFPEILNDNAYKALANDWESNMIRLAMYVGENGYASNPELIKSRVIKGIDLAIENDMYVIVDWHVHAPGDPRDPVYAGAEDFFRDIAALYPNNPHIIYELANEPSSNNNGGAGIPNNEEGWNAVKEYADPIVEMLRDSGNADDNIIIVGSPNWSQRPDLAADNPIDDHHTMYTVHFYTGSHAASTESYPPETPNSERGNVMSNTRYALENGVAVFATEWGTSQANGDGGPYFDEADVWIEFLNENNISWANWSLTNKNEVSGAFTPFELGKSNATSLDPGPDQVWVPEELSLSGEYVRARIKGVNYEPIDRTKYTKVLWDFNDGTKQGFGVNGDSPVEDVVIENEAGALKLSGLDASNDVSEGNYWANARLSADGWGKSVDILGAEKLTMDVIVDEPTTVSIAAIPQGPSANWVNPNRAIKVEPTNFVPLEDKFKAELTITSADSPSLEAIAMHAENNNINNIILFVGTEGADVIYLDNIKVIGTEVEIPVVHDPKGEAVLPSVFEDGTRQGWDWAGESGVKTALTIEEANGSNALSWEFGYPEVKPSDNWATAPRLDFWKSDLVRGENDYVTFDFYLDPVRATEGAMNINLVFQPPTNGYWVQAPKTYTINFDELEEPNQVNGLYHYEVKINVRDITNIQDDTLLRNMMIIFADVESDFAGRVFVDNVRFEGAATTEPVEPEPVDPGEETPPVDEKEAKTEQKEAEKEEKEE.

The N-terminal stretch at 1–30 is a signal peptide; the sequence is MMLRKKTKQLISSILILVLLLSLFPTALAA. Glu190 serves as the catalytic Proton donor. Glu305 acts as the Nucleophile in catalysis. Residues 761-800 are disordered; sequence AATTEPVEPEPVDPGEETPPVDEKEAKTEQKEAEKEEKEE. The segment covering 767–780 has biased composition (acidic residues); sequence VEPEPVDPGEETPP. The span at 781-800 shows a compositional bias: basic and acidic residues; that stretch reads VDEKEAKTEQKEAEKEEKEE.

The protein belongs to the glycosyl hydrolase 5 (cellulase A) family.

The enzyme catalyses Endohydrolysis of (1-&gt;4)-beta-D-glucosidic linkages in cellulose, lichenin and cereal beta-D-glucans.. The chain is Endoglucanase from Halalkalibacter akibai (strain ATCC 43226 / DSM 21942 / CIP 109018 / JCM 9157 / 1139) (Bacillus akibai).